A 90-amino-acid chain; its full sequence is Small ribosomal subunit protein bS16 (90 aa).

The protein belongs to the bacterial ribosomal protein bS16 family.

This is Small ribosomal subunit protein bS16 from Lactiplantibacillus plantarum (strain ATCC BAA-793 / NCIMB 8826 / WCFS1) (Lactobacillus plantarum).